The primary structure comprises 214 residues: Pyridoxine/pyridoxamine 5'-phosphate oxidase (214 aa).

Residues 9 to 12 and lysine 67 each bind substrate; that span reads RKDY. Residues 62-67, 77-78, arginine 83, lysine 84, and glutamine 106 contribute to the FMN site; these read RMVLLK and FT. The substrate site is built by tyrosine 124, arginine 128, and serine 132. FMN is bound by residues 141-142 and tryptophan 186; that span reads QS. 192 to 194 contacts substrate; the sequence is RLH. FMN is bound at residue arginine 196.

The protein belongs to the pyridoxamine 5'-phosphate oxidase family. As to quaternary structure, homodimer. Requires FMN as cofactor.

It carries out the reaction pyridoxamine 5'-phosphate + O2 + H2O = pyridoxal 5'-phosphate + H2O2 + NH4(+). The enzyme catalyses pyridoxine 5'-phosphate + O2 = pyridoxal 5'-phosphate + H2O2. It participates in cofactor metabolism; pyridoxal 5'-phosphate salvage; pyridoxal 5'-phosphate from pyridoxamine 5'-phosphate: step 1/1. It functions in the pathway cofactor metabolism; pyridoxal 5'-phosphate salvage; pyridoxal 5'-phosphate from pyridoxine 5'-phosphate: step 1/1. Its function is as follows. Catalyzes the oxidation of either pyridoxine 5'-phosphate (PNP) or pyridoxamine 5'-phosphate (PMP) into pyridoxal 5'-phosphate (PLP). The sequence is that of Pyridoxine/pyridoxamine 5'-phosphate oxidase from Nostoc sp. (strain PCC 7120 / SAG 25.82 / UTEX 2576).